A 208-amino-acid chain; its full sequence is MPKVDVYDINGKVVGEINLRDDIFGIEVNKHAIHQVIVNQLANRRQGTQSTKTKSEVRGGGRKPWRQKGTGRARHGSIRSAQWVKGGIALGPKPRSYKYAVPKKLRRLALKSALSSKVNENELLVLDSLNFDEIKTKQMANVLKNLKVNDTTAVLVLADKNRNVELSARNIPGLKTLFVNTMNVYDIIRHDKFIITKDAVAKVEEVYA.

The disordered stretch occupies residues 44 to 76; that stretch reads RRQGTQSTKTKSEVRGGGRKPWRQKGTGRARHG. Positions 60–76 are enriched in basic residues; it reads GGRKPWRQKGTGRARHG.

It belongs to the universal ribosomal protein uL4 family. Part of the 50S ribosomal subunit.

Its function is as follows. One of the primary rRNA binding proteins, this protein initially binds near the 5'-end of the 23S rRNA. It is important during the early stages of 50S assembly. It makes multiple contacts with different domains of the 23S rRNA in the assembled 50S subunit and ribosome. Functionally, forms part of the polypeptide exit tunnel. This chain is Large ribosomal subunit protein uL4, found in Acetivibrio thermocellus (strain ATCC 27405 / DSM 1237 / JCM 9322 / NBRC 103400 / NCIMB 10682 / NRRL B-4536 / VPI 7372) (Clostridium thermocellum).